Reading from the N-terminus, the 276-residue chain is uncharacterized protein (276 aa).

The next 7 helical transmembrane spans lie at 5-25, 32-52, 64-84, 104-124, 149-169, 193-213, and 244-264; these read TDLISIIALGLVCAFIGGMLA, PLVGYLVAGIAIGPFTPGFVG, GVILLMFGVGLHFSIGDLLAV, AGLAWGFGWGAGAGLVFGLAL, IAVGWLIVEDLAMVVALVLLP, LWVTLGLTLAKVGVFVAVMLV, and VGIAFASSELFGVSFALGAFF.

This sequence belongs to the monovalent cation:proton antiporter 2 (CPA2) transporter (TC 2.A.37) family.

The protein localises to the cell membrane. This is an uncharacterized protein from Methylorubrum extorquens (Methylobacterium dichloromethanicum).